Here is a 232-residue protein sequence, read N- to C-terminus: Large ribosomal subunit protein uL1 (232 aa).

It belongs to the universal ribosomal protein uL1 family. As to quaternary structure, part of the 50S ribosomal subunit.

Functionally, binds directly to 23S rRNA. The L1 stalk is quite mobile in the ribosome, and is involved in E site tRNA release. In terms of biological role, protein L1 is also a translational repressor protein, it controls the translation of the L11 operon by binding to its mRNA. This is Large ribosomal subunit protein uL1 from Bartonella quintana (strain Toulouse) (Rochalimaea quintana).